The chain runs to 360 residues: MAKLPVEKMRELERRFGEIEARMSAGPSADVYVKLASEYSELQPVVSKIRAYEKATAELADIGAMLADRATDKDMRDLAELEKPEIEERVEALEQEIQILLLPKDAADEKSAILEIRAGTGGSEAALFAGDLFRMYERYAAGKGWRVEVLSASEGEAGGYKEIIATVSGRGVFSRLKFESGVHRVQRVPETEAGGRIHTSAATVAVLPEAEDIDIDIRSEDIRVDTMRSSGAGGQHVNTTDSAVRITHLPTGLVVTSSEKSQHQNRAKAMQVLRSRLYDMERQRADSERSADRRNQVGSGDRSERIRTYNFPQGRLTDHRINLTIYKLDRVMEGEIDEIVDALLADYQASQLALLGEKQN.

Glutamine 235 carries the N5-methylglutamine modification. Residues 281–307 (ERQRADSERSADRRNQVGSGDRSERIR) are compositionally biased toward basic and acidic residues. A disordered region spans residues 281 to 310 (ERQRADSERSADRRNQVGSGDRSERIRTYN).

Belongs to the prokaryotic/mitochondrial release factor family. In terms of processing, methylated by PrmC. Methylation increases the termination efficiency of RF1.

The protein resides in the cytoplasm. Its function is as follows. Peptide chain release factor 1 directs the termination of translation in response to the peptide chain termination codons UAG and UAA. This Sinorhizobium medicae (strain WSM419) (Ensifer medicae) protein is Peptide chain release factor 1.